Consider the following 364-residue polypeptide: Histidinol-phosphate aminotransferase (364 aa).

The residue at position 225 (lysine 225) is an N6-(pyridoxal phosphate)lysine.

The protein belongs to the class-II pyridoxal-phosphate-dependent aminotransferase family. Histidinol-phosphate aminotransferase subfamily. In terms of assembly, homodimer. Pyridoxal 5'-phosphate serves as cofactor.

The catalysed reaction is L-histidinol phosphate + 2-oxoglutarate = 3-(imidazol-4-yl)-2-oxopropyl phosphate + L-glutamate. Its pathway is amino-acid biosynthesis; L-histidine biosynthesis; L-histidine from 5-phospho-alpha-D-ribose 1-diphosphate: step 7/9. The sequence is that of Histidinol-phosphate aminotransferase from Sulfurovum sp. (strain NBC37-1).